Consider the following 87-residue polypeptide: Small ribosomal subunit protein bS20 (87 aa).

Belongs to the bacterial ribosomal protein bS20 family.

In terms of biological role, binds directly to 16S ribosomal RNA. The protein is Small ribosomal subunit protein bS20 of Neorickettsia sennetsu (strain ATCC VR-367 / Miyayama) (Ehrlichia sennetsu).